The chain runs to 511 residues: Lysine--tRNA ligase (511 aa).

Residues glutamate 421 and glutamate 428 each coordinate Mg(2+).

This sequence belongs to the class-II aminoacyl-tRNA synthetase family. Homodimer. It depends on Mg(2+) as a cofactor.

The protein resides in the cytoplasm. It catalyses the reaction tRNA(Lys) + L-lysine + ATP = L-lysyl-tRNA(Lys) + AMP + diphosphate. This is Lysine--tRNA ligase from Janthinobacterium sp. (strain Marseille) (Minibacterium massiliensis).